Consider the following 346-residue polypeptide: Elongation factor Ts (346 aa).

An involved in Mg(2+) ion dislocation from EF-Tu region spans residues 80-83 (TDFV).

The protein belongs to the EF-Ts family.

Its subcellular location is the cytoplasm. Functionally, associates with the EF-Tu.GDP complex and induces the exchange of GDP to GTP. It remains bound to the aminoacyl-tRNA.EF-Tu.GTP complex up to the GTP hydrolysis stage on the ribosome. This chain is Elongation factor Ts, found in Streptococcus agalactiae serotype Ia (strain ATCC 27591 / A909 / CDC SS700).